We begin with the raw amino-acid sequence, 180 residues long: uncharacterized protein (180 aa).

Positions 1–22 (MKRSIIAAAVFSSFFMSAGVFA) are cleaved as a signal peptide.

It belongs to the fimbrial protein family.

Its function is as follows. Part of the yehABCD fimbrial operon. Could contribute to adhesion to various surfaces in specific environmental niches. This is an uncharacterized protein from Escherichia coli (strain K12).